The primary structure comprises 193 residues: Holliday junction branch migration complex subunit RuvA (193 aa).

The interval 1 to 63 is domain I; sequence MIGKLTGTVT…ENINKLYGFE (63 aa). The domain II stretch occupies residues 64 to 148; that stretch reads CRKSQEVARM…GIASSTNVHI (85 aa). A flexible linker region spans residues 149–150; sequence AS. The interval 150-193 is domain III; that stretch reads SEAVSALVKLGFQHKPSHKVVMEIMTKRPAIEIAELITLALKML.

The protein belongs to the RuvA family. In terms of assembly, homotetramer. Forms an RuvA(8)-RuvB(12)-Holliday junction (HJ) complex. HJ DNA is sandwiched between 2 RuvA tetramers; dsDNA enters through RuvA and exits via RuvB. An RuvB hexamer assembles on each DNA strand where it exits the tetramer. Each RuvB hexamer is contacted by two RuvA subunits (via domain III) on 2 adjacent RuvB subunits; this complex drives branch migration. In the full resolvosome a probable DNA-RuvA(4)-RuvB(12)-RuvC(2) complex forms which resolves the HJ.

The protein localises to the cytoplasm. Functionally, the RuvA-RuvB-RuvC complex processes Holliday junction (HJ) DNA during genetic recombination and DNA repair, while the RuvA-RuvB complex plays an important role in the rescue of blocked DNA replication forks via replication fork reversal (RFR). RuvA specifically binds to HJ cruciform DNA, conferring on it an open structure. The RuvB hexamer acts as an ATP-dependent pump, pulling dsDNA into and through the RuvAB complex. HJ branch migration allows RuvC to scan DNA until it finds its consensus sequence, where it cleaves and resolves the cruciform DNA. The protein is Holliday junction branch migration complex subunit RuvA of Neorickettsia sennetsu (strain ATCC VR-367 / Miyayama) (Ehrlichia sennetsu).